The following is a 278-amino-acid chain: tRNA pseudouridine synthase A (278 aa).

Residue D52 is the Nucleophile of the active site. Y110 lines the substrate pocket. The tract at residues 259-278 is disordered; it reads SKRQNGTTKVEQPSSYVHEE. The segment covering 261 to 278 has biased composition (polar residues); that stretch reads RQNGTTKVEQPSSYVHEE.

It belongs to the tRNA pseudouridine synthase TruA family. As to quaternary structure, homodimer.

It catalyses the reaction uridine(38/39/40) in tRNA = pseudouridine(38/39/40) in tRNA. In terms of biological role, formation of pseudouridine at positions 38, 39 and 40 in the anticodon stem and loop of transfer RNAs. The chain is tRNA pseudouridine synthase A from Chloroflexus aurantiacus (strain ATCC 29366 / DSM 635 / J-10-fl).